The chain runs to 148 residues: Lipoprotein signal peptidase (148 aa).

2 consecutive transmembrane segments (helical) span residues 57-77 (QWIF…YLNT) and 80-100 (VHIF…GNLI). Active-site residues include Asp110 and Asp126. Residues 124-144 (IADVFVVVGTVFLCIYVLFFE) traverse the membrane as a helical segment.

This sequence belongs to the peptidase A8 family.

It localises to the cell membrane. The catalysed reaction is Release of signal peptides from bacterial membrane prolipoproteins. Hydrolyzes -Xaa-Yaa-Zaa-|-(S,diacylglyceryl)Cys-, in which Xaa is hydrophobic (preferably Leu), and Yaa (Ala or Ser) and Zaa (Gly or Ala) have small, neutral side chains.. Its pathway is protein modification; lipoprotein biosynthesis (signal peptide cleavage). This protein specifically catalyzes the removal of signal peptides from prolipoproteins. The chain is Lipoprotein signal peptidase from Clostridioides difficile (strain 630) (Peptoclostridium difficile).